A 321-amino-acid polypeptide reads, in one-letter code: Basic endochitinase A (321 aa).

The signal sequence occupies residues 1 to 19 (MGAFALFAVLAMAVTMAVA). The region spanning 20 to 60 (EQCGSQAGGATCPNCLCCSRFGWCGSTSDYCGDGCQSQCAG) is the Chitin-binding type-1 domain. 5 disulfide bridges follow: C22-C37, C31-C43, C34-C61, C36-C50, and C54-C58. The hinge region (Gly/Pro/Thr-rich) stretch occupies residues 62-79 (GGGGTPVTPTPTPSGGGG). The catalytic stretch occupies residues 80–321 (VSSIVSRALF…LDCYNQRPFA (242 aa)). Intrachain disulfides connect C101/C163, C175/C183, and C301/C314. The active-site Proton donor is the E145.

This sequence belongs to the glycosyl hydrolase 19 family. Chitinase class I subfamily. In terms of tissue distribution, localized in the aleurone cells of the seed endosperm (at protein level).

The catalysed reaction is Random endo-hydrolysis of N-acetyl-beta-D-glucosaminide (1-&gt;4)-beta-linkages in chitin and chitodextrins.. Functionally, defense against chitin-containing fungal pathogens. Binds the hyphal tips, lateral walls and septa of fungi and degrades mature chitin. The polypeptide is Basic endochitinase A (Secale cereale (Rye)).